The chain runs to 104 residues: Circadian clock oscillator protein KaiB (104 aa).

This sequence belongs to the KaiB family. In terms of assembly, the KaiABC complex composition changes during the circadian cycle to control KaiC phosphorylation. Complexes KaiC(6), KaiA(2-4):KaiC(6), KaiB(6):KaiC(6) and KaiC(6):KaiB(6):KaiA(12) are among the most important forms, many form cooperatively. Undergoes a major conformational rearrangment; in the free state forms homotetramers as a dimer of dimers. When bound to the CI domain of KaiC switches to a monomeric thioredoxin-fold (KaiB(fs)). KaiB(fs) binds CikA, leading it to dephosphorylate phospho-RpaA.

In terms of biological role, key component of the KaiABC oscillator complex, which constitutes the main circadian regulator in cyanobacteria. Complex composition changes during the circadian cycle to control KaiC phosphorylation. KaiA stimulates KaiC autophosphorylation, while KaiB sequesters KaiA, leading to KaiC autodephosphorylation. Phospho-Ser-431 KaiC accumulation triggers binding of KaiB to form the KaiB(6):KaiC(6) complex, leading to changes in output regulators CikA and SasA. KaiB switches to a thioredoxin-like fold (KaiB(fs)) when bound to KaiC. KaiB(6):KaiC(6) formation exposes a site for KaiA binding that sequesters KaiA from KaiC, making the KaiC(6):KaiB(6):KaiA(12) complex that results in KaiC autodephosphorylation. Its function is as follows. A metamorphic protein which reversibly switches between an inactive tetrameric fold and a rare, thioredoxin-like monomeric fold (KaiB(fs)). KaiB(fs) binds phospho-KaiC, KaiA and CikA. KaiA and CikA compete for binding to KaiB(fs), and KaiB(fs) and SasA compete for binding to KaiC, thus the clock oscillator and output signal pathway are tightly coupled. This chain is Circadian clock oscillator protein KaiB, found in Parasynechococcus marenigrum (strain WH8102).